Reading from the N-terminus, the 420-residue chain is Gamma-glutamyl phosphate reductase (420 aa).

The protein belongs to the gamma-glutamyl phosphate reductase family.

It is found in the cytoplasm. It catalyses the reaction L-glutamate 5-semialdehyde + phosphate + NADP(+) = L-glutamyl 5-phosphate + NADPH + H(+). Its pathway is amino-acid biosynthesis; L-proline biosynthesis; L-glutamate 5-semialdehyde from L-glutamate: step 2/2. Its function is as follows. Catalyzes the NADPH-dependent reduction of L-glutamate 5-phosphate into L-glutamate 5-semialdehyde and phosphate. The product spontaneously undergoes cyclization to form 1-pyrroline-5-carboxylate. In Streptococcus pneumoniae (strain Hungary19A-6), this protein is Gamma-glutamyl phosphate reductase.